Reading from the N-terminus, the 342-residue chain is Holliday junction branch migration complex subunit RuvB (342 aa).

A large ATPase domain (RuvB-L) region spans residues 1–181 (MENRMVTPFD…FGMLCAMEFY (181 aa)). ATP is bound by residues Leu-20, Arg-21, Gly-62, Lys-65, Thr-66, Thr-67, 128 to 130 (EDY), Arg-171, Tyr-181, and Arg-218. Thr-66 is a Mg(2+) binding site. The tract at residues 182–252 (TDEELMEIVV…GAKAALDLLE (71 aa)) is small ATPAse domain (RuvB-S). The segment at 255-342 (KEGLDKIDNK…KDNQVSIFNK (88 aa)) is head domain (RuvB-H). Positions 310 and 315 each coordinate DNA.

Belongs to the RuvB family. In terms of assembly, homohexamer. Forms an RuvA(8)-RuvB(12)-Holliday junction (HJ) complex. HJ DNA is sandwiched between 2 RuvA tetramers; dsDNA enters through RuvA and exits via RuvB. An RuvB hexamer assembles on each DNA strand where it exits the tetramer. Each RuvB hexamer is contacted by two RuvA subunits (via domain III) on 2 adjacent RuvB subunits; this complex drives branch migration. In the full resolvosome a probable DNA-RuvA(4)-RuvB(12)-RuvC(2) complex forms which resolves the HJ.

The protein resides in the cytoplasm. It catalyses the reaction ATP + H2O = ADP + phosphate + H(+). The RuvA-RuvB-RuvC complex processes Holliday junction (HJ) DNA during genetic recombination and DNA repair, while the RuvA-RuvB complex plays an important role in the rescue of blocked DNA replication forks via replication fork reversal (RFR). RuvA specifically binds to HJ cruciform DNA, conferring on it an open structure. The RuvB hexamer acts as an ATP-dependent pump, pulling dsDNA into and through the RuvAB complex. RuvB forms 2 homohexamers on either side of HJ DNA bound by 1 or 2 RuvA tetramers; 4 subunits per hexamer contact DNA at a time. Coordinated motions by a converter formed by DNA-disengaged RuvB subunits stimulates ATP hydrolysis and nucleotide exchange. Immobilization of the converter enables RuvB to convert the ATP-contained energy into a lever motion, pulling 2 nucleotides of DNA out of the RuvA tetramer per ATP hydrolyzed, thus driving DNA branch migration. The RuvB motors rotate together with the DNA substrate, which together with the progressing nucleotide cycle form the mechanistic basis for DNA recombination by continuous HJ branch migration. Branch migration allows RuvC to scan DNA until it finds its consensus sequence, where it cleaves and resolves cruciform DNA. The chain is Holliday junction branch migration complex subunit RuvB from Clostridium botulinum (strain ATCC 19397 / Type A).